We begin with the raw amino-acid sequence, 159 residues long: Ribosomal RNA large subunit methyltransferase H (159 aa).

Residues leucine 76, glycine 108, and 127 to 132 each bind S-adenosyl-L-methionine; that span reads LSRLTF.

Belongs to the RNA methyltransferase RlmH family. As to quaternary structure, homodimer.

It localises to the cytoplasm. It catalyses the reaction pseudouridine(1915) in 23S rRNA + S-adenosyl-L-methionine = N(3)-methylpseudouridine(1915) in 23S rRNA + S-adenosyl-L-homocysteine + H(+). Functionally, specifically methylates the pseudouridine at position 1915 (m3Psi1915) in 23S rRNA. In Syntrophomonas wolfei subsp. wolfei (strain DSM 2245B / Goettingen), this protein is Ribosomal RNA large subunit methyltransferase H.